A 943-amino-acid polypeptide reads, in one-letter code: UvrABC system protein A (943 aa).

31 to 38 (GLSGSGKS) serves as a coordination point for ATP. The C4-type zinc finger occupies 253–280 (CPHCGYSVPELEPRLFSFNNPAGACPTC). ABC transporter domains follow at residues 310-587 (WDRR…PHSI) and 607-937 (LDKK…RFLK). ATP is bound at residue 640-647 (GVSGSGKS). The C4-type zinc-finger motif lies at 740-766 (CEACQGDGVIKVEMHFLPDVYVPCEQC).

The protein belongs to the ABC transporter superfamily. UvrA family. In terms of assembly, forms a heterotetramer with UvrB during the search for lesions.

Its subcellular location is the cytoplasm. The UvrABC repair system catalyzes the recognition and processing of DNA lesions. UvrA is an ATPase and a DNA-binding protein. A damage recognition complex composed of 2 UvrA and 2 UvrB subunits scans DNA for abnormalities. When the presence of a lesion has been verified by UvrB, the UvrA molecules dissociate. The sequence is that of UvrABC system protein A from Pasteurella multocida (strain Pm70).